Here is a 424-residue protein sequence, read N- to C-terminus: ATP-citrate synthase alpha chain protein 3 (424 aa).

Residues asparagine 343, threonine 345, and arginine 376 each contribute to the citrate site.

It belongs to the succinate/malate CoA ligase beta subunit family. As to quaternary structure, heterooctamer of 4 alpha and 4 beta chains.

Its subcellular location is the cytoplasm. The protein localises to the cytosol. The enzyme catalyses oxaloacetate + acetyl-CoA + ADP + phosphate = citrate + ATP + CoA. ATP citrate-lyase is the primary enzyme responsible for the synthesis of cytosolic acetyl-CoA, used for the elongation of fatty acids and biosynthesis of isoprenoids, flavonoids and malonated derivatives. May supply substrate to the cytosolic acetyl-CoA carboxylase, which generates the malonyl-CoA used for the synthesis of a multitude of compounds, including very long chain fatty acids and flavonoids. Required for normal growth and development and elongation of C18 fatty acids to C20 to C24 fatty acids in seeds. In contrast to all known animal ACL enzymes having a homomeric structure, plant ACLs are composed of alpha and beta chains. The chain is ATP-citrate synthase alpha chain protein 3 (ACLA-3) from Arabidopsis thaliana (Mouse-ear cress).